The following is an 875-amino-acid chain: Phosphatidylinositol 3-kinase VPS34 (875 aa).

One can recognise a C2 PI3K-type domain in the interval 14–188 (LDVPLKVKIK…WLDEITISKL (175 aa)). In terms of domain architecture, PIK helical spans 293–526 (LDKQVKPDIK…SSFWSRLDKK (234 aa)). The 267-residue stretch at 593 to 859 (CPETSKVFKS…LINDSVNALL (267 aa)) folds into the PI3K/PI4K catalytic domain. The interval 599-605 (VFKSSLS) is G-loop. The tract at residues 728-736 (GVGDRHLDN) is catalytic loop. Residues 747–768 (HADFGYILGQDPKPFPPLMKLP) form an activation loop region.

It belongs to the PI3/PI4-kinase family. As to quaternary structure, component of the autophagy-specific VPS34 PI3-kinase complex I composed of VPS15, VPS30, VPS34, ATG14 and ATG38, and of the VPS34 PI3-kinase complex II composed of VPS15, VPS30, VPS34 and VPS38. Interacts directly with ATG38. Interacts directly with VPS34. Autophosphorylated. Might also be phosphorylated by VPS15.

It is found in the golgi apparatus. The protein resides in the trans-Golgi network membrane. It localises to the endosome membrane. It catalyses the reaction a 1,2-diacyl-sn-glycero-3-phospho-(1D-myo-inositol) + ATP = a 1,2-diacyl-sn-glycero-3-phospho-(1D-myo-inositol-3-phosphate) + ADP + H(+). Phosphatidylinositol 3-kinase activity is directly dependent on VPS15 protein kinase activity. Phosphatidylinositol 3-kinase required for cytoplasm to vacuole transport (Cvt) and autophagy as a part of the autophagy-specific VPS34 PI3-kinase complex I. This complex is essential to recruit the ATG8-phosphatidylinositol conjugate and the ATG12-ATG5 conjugate to the pre-autophagosomal structure. Also involved in endosome-to-Golgi retrograde transport as part of the VPS34 PI3-kinase complex II. This second complex is required for the endosome-to-Golgi retrieval of PEP1 and KEX2, and the recruitment of VPS5 and VPS7, two components of the retromer complex, to endosomal membranes (probably through the synthesis of a specific pool of phosphatidylinositol 3-phosphate recruiting the retromer to the endosomes). Its activation by VPS15 may lead to the phosphorylation of phosphatidylinositol in the sorting compartment membrane. Finally, it might also be involved in ethanol tolerance and cell wall integrity. The chain is Phosphatidylinositol 3-kinase VPS34 (VPS34) from Saccharomyces cerevisiae (strain ATCC 204508 / S288c) (Baker's yeast).